Consider the following 378-residue polypeptide: 1-acyl-sn-glycerol-3-phosphate acyltransferase delta (378 aa).

Residues Phe11–Ile31 form a helical membrane-spanning segment. The short motif at His96 to Asp101 is the HXXXXD motif element. The next 3 membrane-spanning stretches (helical) occupy residues Glu125–Thr145, Trp311–Ser331, and Leu338–Val358.

Belongs to the 1-acyl-sn-glycerol-3-phosphate acyltransferase family.

Its subcellular location is the endoplasmic reticulum membrane. The catalysed reaction is a 1-acyl-sn-glycero-3-phosphate + an acyl-CoA = a 1,2-diacyl-sn-glycero-3-phosphate + CoA. It carries out the reaction (4Z,7Z,10Z,13Z,16Z,19Z)-docosahexaenoyl-CoA + 1-hexadecanoyl-sn-glycero-3-phosphate = 1-hexadecanoyl-2-(4Z,7Z,10Z,13Z,16Z,19Z-docosahexaenoyl)-sn-glycero-3-phosphate + CoA. It catalyses the reaction 1-octadecanoyl-sn-glycero-3-phosphate + (9Z,12Z)-octadecadienoyl-CoA = 1-octadecanoyl-2-(9Z,12Z-octadecadienoyl)-sn-glycero-3-phosphate + CoA. The enzyme catalyses 1-octadecanoyl-sn-glycero-3-phosphate + (4Z,7Z,10Z,13Z,16Z,19Z)-docosahexaenoyl-CoA = 1-octadecanoyl-2-(4Z,7Z,10Z,13Z,16Z,19Z-docosahexaenoyl)-sn-glycero-3-phosphate + CoA. The catalysed reaction is (4Z,7Z,10Z,13Z,16Z,19Z)-docosahexaenoyl-CoA + 1-(9Z-octadecenoyl)-sn-glycero-3-phosphate = 1-(9Z-octadecenoyl)-2-(4Z,7Z,10Z,13Z,16Z,19Z-docosahexaenoyl)-sn-glycero-3-phosphate + CoA. Its pathway is phospholipid metabolism; CDP-diacylglycerol biosynthesis; CDP-diacylglycerol from sn-glycerol 3-phosphate: step 2/3. Converts 1-acyl-sn-glycerol-3-phosphate (lysophosphatidic acid or LPA) into 1,2-diacyl-sn-glycerol-3-phosphate (phosphatidic acid or PA) by incorporating an acyl moiety at the sn-2 position of the glycerol backbone. Exhibits high acyl-CoA specificity for polyunsaturated fatty acyl-CoA, especially docosahexaenoyl-CoA (22:6-CoA, DHA-CoA). This is 1-acyl-sn-glycerol-3-phosphate acyltransferase delta (Agpat4) from Rattus norvegicus (Rat).